The primary structure comprises 191 residues: Xanthine phosphoribosyltransferase (191 aa).

The xanthine site is built by L20 and N27. 128–132 contributes to the 5-phospho-alpha-D-ribose 1-diphosphate binding site; it reads ANGQA. Residue K156 coordinates xanthine.

Belongs to the purine/pyrimidine phosphoribosyltransferase family. Xpt subfamily. In terms of assembly, homodimer.

Its subcellular location is the cytoplasm. The enzyme catalyses XMP + diphosphate = xanthine + 5-phospho-alpha-D-ribose 1-diphosphate. It participates in purine metabolism; XMP biosynthesis via salvage pathway; XMP from xanthine: step 1/1. Functionally, converts the preformed base xanthine, a product of nucleic acid breakdown, to xanthosine 5'-monophosphate (XMP), so it can be reused for RNA or DNA synthesis. In Limosilactobacillus reuteri (strain DSM 20016) (Lactobacillus reuteri), this protein is Xanthine phosphoribosyltransferase.